The following is a 208-amino-acid chain: Uracil phosphoribosyltransferase (208 aa).

5-phospho-alpha-D-ribose 1-diphosphate-binding positions include Arg-78, Arg-103, and Asp-130–Ser-138. Uracil-binding positions include Ile-193 and Gly-198 to Ala-200. Asp-199 serves as a coordination point for 5-phospho-alpha-D-ribose 1-diphosphate.

It belongs to the UPRTase family. It depends on Mg(2+) as a cofactor.

It catalyses the reaction UMP + diphosphate = 5-phospho-alpha-D-ribose 1-diphosphate + uracil. The protein operates within pyrimidine metabolism; UMP biosynthesis via salvage pathway; UMP from uracil: step 1/1. Its activity is regulated as follows. Allosterically activated by GTP. In terms of biological role, catalyzes the conversion of uracil and 5-phospho-alpha-D-ribose 1-diphosphate (PRPP) to UMP and diphosphate. The polypeptide is Uracil phosphoribosyltransferase (Desulfovibrio desulfuricans (strain ATCC 27774 / DSM 6949 / MB)).